The sequence spans 129 residues: 3-aminoacrylate deaminase RutC (129 aa).

It belongs to the RutC family.

The catalysed reaction is (Z)-3-aminoacrylate + H2O + H(+) = 3-oxopropanoate + NH4(+). Functionally, involved in pyrimidine catabolism. Catalyzes the deamination of 3-aminoacrylate to malonic semialdehyde, a reaction that can also occur spontaneously. RutC may facilitate the reaction and modulate the metabolic fitness, rather than catalyzing essential functions. The chain is 3-aminoacrylate deaminase RutC from Rhizobium rhizogenes (strain K84 / ATCC BAA-868) (Agrobacterium radiobacter).